A 579-amino-acid polypeptide reads, in one-letter code: Insulin-like growth factor 2 mRNA-binding protein 3 (579 aa).

2 consecutive RRM domains span residues 2–75 and 81–156; these read NKLY…HSVP and RKLQ…YIPD. The segment at 160–192 is disordered; the sequence is AQQNPLQQPRGRRGLGQRGSSRQGSPGSVSKQK. Residues 177–187 show a composition bias toward low complexity; it reads RGSSRQGSPGS. Serine 184 carries the post-translational modification Phosphoserine. KH domains lie at 195 to 260, 276 to 343, and 405 to 470; these read DLPL…CKSI, EIPL…EEEI, and TETV…QGRI. Glycyl lysine isopeptide (Lys-Gly) (interchain with G-Cter in SUMO2) cross-links involve residues lysine 450 and lysine 475. Residues 487–553 form the KH 4 domain; that stretch reads KLEAHIRVPS…YACQVAQRKI (67 aa). Threonine 528 is subject to Phosphothreonine.

Belongs to the RRM IMP/VICKZ family. In terms of assembly, can form homooligomers and heterooligomers with IGF2BP1 and IGF2BP3 in an RNA-dependent manner. Interacts with IGF2BP1. Interacts with ELAVL1, DHX9, HNRNPU, MATR3 and PABPC1. In terms of tissue distribution, expressed in fetal liver, fetal lung, fetal kidney, fetal thymus, fetal placenta, fetal follicles of ovary and gonocytes of testis, growing oocytes, spermatogonia and semen (at protein level). Expressed in cervix adenocarcinoma, in testicular, pancreatic and renal-cell carcinomas (at protein level). Expressed ubiquitously during fetal development at 8 and 14 weeks of gestation. Expressed in ovary, testis, brain, placenta, pancreatic cancer tissues and pancreatic cancer cell lines.

The protein localises to the nucleus. The protein resides in the cytoplasm. It localises to the P-body. It is found in the stress granule. Its function is as follows. RNA-binding factor that may recruit target transcripts to cytoplasmic protein-RNA complexes (mRNPs). This transcript 'caging' into mRNPs allows mRNA transport and transient storage. It also modulates the rate and location at which target transcripts encounter the translational apparatus and shields them from endonuclease attacks or microRNA-mediated degradation. Preferentially binds to N6-methyladenosine (m6A)-containing mRNAs and increases their stability. Binds to the 3'-UTR of CD44 mRNA and stabilizes it, hence promotes cell adhesion and invadopodia formation in cancer cells. Binds to beta-actin/ACTB and MYC transcripts. Increases MYC mRNA stability by binding to the coding region instability determinant (CRD) and binding is enhanced by m6A-modification of the CRD. Binds to the 5'-UTR of the insulin-like growth factor 2 (IGF2) mRNAs. The protein is Insulin-like growth factor 2 mRNA-binding protein 3 (IGF2BP3) of Homo sapiens (Human).